The chain runs to 331 residues: Decarboxylase orsB (331 aa).

Positions 11, 157, and 284 each coordinate Zn(2+).

It belongs to the metallo-dependent hydrolases superfamily. ACMSD family.

The protein operates within secondary metabolite biosynthesis. Decarboxylase; part of the gene cluster that mediates the biosynthesis of orsellinic acid, as well as of the cathepsin K inhibitors F9775 A and F9775 B. The non-reducing polyketide synthase orsA produces orsellinic acid by condensing acetyl-CoA with 3 malonyl-CoA units. Further modifications by the decarboxylase orsB and the tyrosinase-like protein orsC lead to the production of F9775 A and F9775 B. The functions of orsD and orsE remain unclear since only orsB and orsC are required to convert orsellinic acid into F9775 A and F9775 B. The polypeptide is Decarboxylase orsB (Emericella nidulans (strain FGSC A4 / ATCC 38163 / CBS 112.46 / NRRL 194 / M139) (Aspergillus nidulans)).